The sequence spans 620 residues: Chaperone protein DnaK (620 aa).

Residue T197 is modified to Phosphothreonine; by autocatalysis. A disordered region spans residues 597–620; it reads AMANKNNAEQPKKKDDDVIDAEVE.

It belongs to the heat shock protein 70 family.

Acts as a chaperone. This Helicobacter pylori (strain G27) protein is Chaperone protein DnaK.